The following is a 272-amino-acid chain: NH(3)-dependent NAD(+) synthetase (272 aa).

Residue 45–52 (GISGGQDS) coordinates ATP. Asp51 provides a ligand contact to Mg(2+). Deamido-NAD(+) is bound at residue Arg138. Thr158 provides a ligand contact to ATP. Glu163 is a Mg(2+) binding site. Residues Lys171 and Asp178 each coordinate deamido-NAD(+). The ATP site is built by Lys187 and Thr209. 258-259 (HK) is a binding site for deamido-NAD(+).

It belongs to the NAD synthetase family. In terms of assembly, homodimer.

The catalysed reaction is deamido-NAD(+) + NH4(+) + ATP = AMP + diphosphate + NAD(+) + H(+). It functions in the pathway cofactor biosynthesis; NAD(+) biosynthesis; NAD(+) from deamido-NAD(+) (ammonia route): step 1/1. Its function is as follows. Catalyzes the ATP-dependent amidation of deamido-NAD to form NAD. Uses ammonia as a nitrogen source. In Bacillus cereus (strain 03BB102), this protein is NH(3)-dependent NAD(+) synthetase.